We begin with the raw amino-acid sequence, 431 residues long: Tol-Pal system protein TolB (431 aa).

Residues 1-26 form the signal peptide; it reads MSLMTKLGFRALVASCLITAGSAANA. The tract at residues 406 to 431 is disordered; that stretch reads DGSAPPQILSVQGGSVREPSWGPFMQ.

It belongs to the TolB family. The Tol-Pal system is composed of five core proteins: the inner membrane proteins TolA, TolQ and TolR, the periplasmic protein TolB and the outer membrane protein Pal. They form a network linking the inner and outer membranes and the peptidoglycan layer.

It localises to the periplasm. In terms of biological role, part of the Tol-Pal system, which plays a role in outer membrane invagination during cell division and is important for maintaining outer membrane integrity. The chain is Tol-Pal system protein TolB from Burkholderia cenocepacia (strain HI2424).